The sequence spans 261 residues: Acetoacetate decarboxylase 2 (261 aa).

Lys116 functions as the Schiff-base intermediate with acetoacetate in the catalytic mechanism.

It belongs to the ADC family.

The enzyme catalyses acetoacetate + H(+) = acetone + CO2. In terms of biological role, catalyzes the conversion of acetoacetate to acetone and carbon dioxide. This Mesorhizobium japonicum (strain LMG 29417 / CECT 9101 / MAFF 303099) (Mesorhizobium loti (strain MAFF 303099)) protein is Acetoacetate decarboxylase 2.